The sequence spans 300 residues: Enoyl-CoA hydratase domain-containing protein 3, mitochondrial (300 aa).

Residues 1 to 66 (MALVAGLRAF…RNIVLSNPRR (66 aa)) constitute a mitochondrion transit peptide. Residues 32–54 (SPGSARPAGPESEPRLTSTRQQD) form a disordered region. Lys110 is subject to N6-succinyllysine.

Belongs to the enoyl-CoA hydratase/isomerase family.

The protein localises to the mitochondrion. Its function is as follows. May play a role in fatty acid biosynthesis and insulin sensitivity. The sequence is that of Enoyl-CoA hydratase domain-containing protein 3, mitochondrial from Rattus norvegicus (Rat).